The primary structure comprises 212 residues: Ribosomal RNA small subunit methyltransferase G (212 aa).

S-adenosyl-L-methionine is bound by residues glycine 76, methionine 81, valine 127 to glutamate 128, and arginine 145.

It belongs to the methyltransferase superfamily. RNA methyltransferase RsmG family.

Its subcellular location is the cytoplasm. The enzyme catalyses guanosine(527) in 16S rRNA + S-adenosyl-L-methionine = N(7)-methylguanosine(527) in 16S rRNA + S-adenosyl-L-homocysteine. In terms of biological role, specifically methylates the N7 position of guanine in position 527 of 16S rRNA. This Acinetobacter baylyi (strain ATCC 33305 / BD413 / ADP1) protein is Ribosomal RNA small subunit methyltransferase G.